We begin with the raw amino-acid sequence, 694 residues long: Glycine--tRNA ligase beta subunit (694 aa).

Belongs to the class-II aminoacyl-tRNA synthetase family. In terms of assembly, tetramer of two alpha and two beta subunits.

The protein resides in the cytoplasm. It carries out the reaction tRNA(Gly) + glycine + ATP = glycyl-tRNA(Gly) + AMP + diphosphate. This is Glycine--tRNA ligase beta subunit from Moorella thermoacetica (strain ATCC 39073 / JCM 9320).